A 305-amino-acid polypeptide reads, in one-letter code: DNA-directed RNA polymerase 35 kDa subunit (305 aa).

Belongs to the poxviridae DNA-directed RNA polymerase 35 kDa subunit family. As to quaternary structure, the DNA-dependent RNA polymerase used for intermediate and late genes expression consists of eight subunits 147 kDa, 133 kDa, 35 kDa, 30 kDa, 22 kDa, 19 kDa, 18 kDa and 7 kDa totalling more than 500 kDa in mass. The same holoenzyme, with the addition of the transcription-specificity factor RAP94, is used for early gene expression.

It localises to the virion. The catalysed reaction is RNA(n) + a ribonucleoside 5'-triphosphate = RNA(n+1) + diphosphate. Its function is as follows. Part of the DNA-dependent RNA polymerase which catalyzes the transcription of viral DNA into RNA using the four ribonucleoside triphosphates as substrates. Responsible for the transcription of early, intermediate and late genes. DNA-dependent RNA polymerase associates with the early transcription factor (ETF), itself composed of D6 and A7, thereby allowing the early genes transcription. Late transcription, and probably also intermediate transcription, require newly synthesized RNA polymerase. This chain is DNA-directed RNA polymerase 35 kDa subunit (RPO35), found in Homo sapiens (Human).